Consider the following 131-residue polypeptide: Translation initiation factor 5A (131 aa).

The residue at position 36 (lysine 36) is a Hypusine.

The protein belongs to the eIF-5A family.

The protein resides in the cytoplasm. Functionally, functions by promoting the formation of the first peptide bond. The chain is Translation initiation factor 5A from Saccharolobus solfataricus (strain ATCC 35092 / DSM 1617 / JCM 11322 / P2) (Sulfolobus solfataricus).